The sequence spans 793 residues: Kinesin-like protein KIF3C (793 aa).

In terms of domain architecture, Kinesin motor spans 10 to 365 (ALKVVARCRP…LRFANRAKNI (356 aa)). 97–104 (GQTGTGKT) provides a ligand contact to ATP. Disordered stretches follow at residues 251–288 (ERQNKAGPNTAGGASTPSSGGSGGGGGSGGGAGGERPK), 395–423 (EKRGMLGKRPRRKSSRGKKAVSAPPGYPE), and 756–793 (KVRKSRSWCQSPQRPPPSTTHASLASASLRPATVADHE). The span at 270–284 (GGSGGGGGSGGGAGG) shows a compositional bias: gly residues. The stretch at 376–630 (KDTLLREFQE…QNEQTRELKL (255 aa)) forms a coiled coil. Positions 399–413 (MLGKRPRRKSSRGKK) are enriched in basic residues. A globular region spans residues 631–793 (KYLIIENFIP…LRPATVADHE (163 aa)).

The protein belongs to the TRAFAC class myosin-kinesin ATPase superfamily. Kinesin family. Kinesin II subfamily. As to quaternary structure, heterodimer of KIF3A and KIF3C.

It is found in the cytoplasm. It localises to the cytoskeleton. Its function is as follows. Microtubule-based anterograde translocator for membranous organelles. This is Kinesin-like protein KIF3C (KIF3C) from Pongo abelii (Sumatran orangutan).